The following is a 360-amino-acid chain: D-alanine--D-alanine ligase (360 aa).

An ATP-grasp domain is found at 146–352 (KLCVADAGIA…FPELAERLLQ (207 aa)). Position 179-234 (179-234 (EEKFIYPFFVKPANLGSSIGISKVHHREQLPAALKSACSLDSKIVVEKAITGREIE)) interacts with ATP. Residues aspartate 305, glutamate 319, and asparagine 321 each coordinate Mg(2+).

It belongs to the D-alanine--D-alanine ligase family. The cofactor is Mg(2+). Mn(2+) is required as a cofactor.

The protein localises to the cytoplasm. It carries out the reaction 2 D-alanine + ATP = D-alanyl-D-alanine + ADP + phosphate + H(+). Its pathway is cell wall biogenesis; peptidoglycan biosynthesis. Functionally, cell wall formation. In Pelodictyon phaeoclathratiforme (strain DSM 5477 / BU-1), this protein is D-alanine--D-alanine ligase.